Reading from the N-terminus, the 932-residue chain is UPF0182 protein Syncc9902_1151 (932 aa).

A run of 9 helical transmembrane segments spans residues 4 to 24, 40 to 60, 85 to 105, 124 to 144, 151 to 171, 201 to 221, 243 to 263, 293 to 313, and 315 to 335; these read FLWILLPPVLVVVARMHVEWV, MLQLLFAGAGSIPVFLAVLWL, VLMVSGLAFLACSVVLSDLAI, MASEWKALLPIQLAIAGVSLC, WVAVAMGFALVLVVSRAWGVW, IQLGLELLVLSGTFTTAHAVW, YRWLSIGVGTNLLGVAGLVWL, LLAFVLLVLGVSCIVRGIGHL, and RLLLLCVAAIVIIESTLTPLT.

It belongs to the UPF0182 family.

The protein localises to the cell membrane. The protein is UPF0182 protein Syncc9902_1151 of Synechococcus sp. (strain CC9902).